Reading from the N-terminus, the 335-residue chain is Probable E3 ubiquitin-protein ligase BAH1-like (335 aa).

The region spanning Met-1–Leu-163 is the SPX domain. An RING-type zinc finger spans residues Cys-231–Arg-280.

It belongs to the RING-type zinc finger family.

The enzyme catalyses S-ubiquitinyl-[E2 ubiquitin-conjugating enzyme]-L-cysteine + [acceptor protein]-L-lysine = [E2 ubiquitin-conjugating enzyme]-L-cysteine + N(6)-ubiquitinyl-[acceptor protein]-L-lysine.. It functions in the pathway protein modification; protein ubiquitination. The polypeptide is Probable E3 ubiquitin-protein ligase BAH1-like (RF178) (Arabidopsis thaliana (Mouse-ear cress)).